The sequence spans 207 residues: Large ribosomal subunit protein uL4 (207 aa).

A disordered region spans residues K50–Q75.

It belongs to the universal ribosomal protein uL4 family. As to quaternary structure, part of the 50S ribosomal subunit.

One of the primary rRNA binding proteins, this protein initially binds near the 5'-end of the 23S rRNA. It is important during the early stages of 50S assembly. It makes multiple contacts with different domains of the 23S rRNA in the assembled 50S subunit and ribosome. Functionally, forms part of the polypeptide exit tunnel. The protein is Large ribosomal subunit protein uL4 of Rickettsia akari (strain Hartford).